A 643-amino-acid chain; its full sequence is Protein THEMIS2 (643 aa).

2 CABIT regions span residues 1 to 238 (MEPV…TASS) and 239 to 514 (RHVH…KAKG). The tract at residues 546–631 (EIQAPPPRPP…RQDLDDDEHD (86 aa)) is disordered. A Phosphothreonine modification is found at Thr-593. The segment covering 609 to 619 (PAHRKGHRPAK) has biased composition (basic residues). Phosphotyrosine is present on Tyr-632.

Belongs to the themis family. As to quaternary structure, interacts with VAV1. Interacts with LAT. Interacts constitutively with GRB2, LYN and PLCG2; these interactions increase the activation of PLCG2 and its downstream pathways following B cell receptor stimulation. In terms of processing, phosphorylation at Tyr-632 is induced by LPS. Phosphorylated by Src kinases (Lck or Fyn) following BCR engagement. As to expression, expressed in different endometrial adenocarcinoma cell lines and various other cell lines apart from the prostate cell line LNCaP and the ovarian cancer cell line BG1.

It localises to the nucleus. The protein resides in the cytoplasm. In terms of biological role, may constitute a control point in macrophage inflammatory response, promoting LPS-induced TLR4-mediated TNF production. Determines the threshold for activation of B cells by low-affinity and low-avidity ligands via PLCG2 activation and its downstream pathways. The protein is Protein THEMIS2 of Homo sapiens (Human).